We begin with the raw amino-acid sequence, 412 residues long: Gamma-glutamyl phosphate reductase (412 aa).

The protein belongs to the gamma-glutamyl phosphate reductase family.

It is found in the cytoplasm. It carries out the reaction L-glutamate 5-semialdehyde + phosphate + NADP(+) = L-glutamyl 5-phosphate + NADPH + H(+). Its pathway is amino-acid biosynthesis; L-proline biosynthesis; L-glutamate 5-semialdehyde from L-glutamate: step 2/2. In terms of biological role, catalyzes the NADPH-dependent reduction of L-glutamate 5-phosphate into L-glutamate 5-semialdehyde and phosphate. The product spontaneously undergoes cyclization to form 1-pyrroline-5-carboxylate. The protein is Gamma-glutamyl phosphate reductase of Bartonella quintana (strain Toulouse) (Rochalimaea quintana).